The primary structure comprises 260 residues: MKHSKKLLLCISFLLITIFISGCGFINKDDSKETEIKKSFNKTLSMYPIKNLEDLYDKEGYRDEEFNKNDKGTWVITSSINIQQKGEGLKTRRMVLFMNRNTRTSKGKFMITEVKEKSDIGFQTRKKEYPVKLIDNKFIPSKQIKDEKIKKEIENFKFFSQYGNFKDLKDYKDGEVSYNPNAPNYSAKYQLSNNDYNVKQIRKRYDIPTEQAPKLLLKGTGDLKGSSTGSKNIEFTFVEKKGENIYFTDSVEYTPSGDDK.

The first 22 residues, 1 to 22 (MKHSKKLLLCISFLLITIFISG), serve as a signal peptide directing secretion. A lipid anchor (N-palmitoyl cysteine) is attached at Cys-23. Cys-23 carries S-diacylglycerol cysteine lipidation.

Belongs to the staphylococcal tandem lipoprotein family.

It is found in the cell membrane. This is an uncharacterized protein from Staphylococcus epidermidis (strain ATCC 35984 / DSM 28319 / BCRC 17069 / CCUG 31568 / BM 3577 / RP62A).